Reading from the N-terminus, the 195-residue chain is MILPIYVYGHEALRNETDPVQENTEALQELIDNMIETMHNAAGIGLAAPQVGRTERLFVVDLTPMADEIAEAGEPLPPQPMVFINPEIVEESEDTAEMEEGCLSIPEVREAVARPERIRMRYRDREFEEQELEAGGMLSRVLQHERDHLDGVLFTDYLSSFRKRLLRRPLREMVNGEVEADYPLVTKDDETVPSR.

Cys-102 and His-144 together coordinate Fe cation. Residue Glu-145 is part of the active site. His-148 is a Fe cation binding site.

This sequence belongs to the polypeptide deformylase family. Fe(2+) is required as a cofactor.

The enzyme catalyses N-terminal N-formyl-L-methionyl-[peptide] + H2O = N-terminal L-methionyl-[peptide] + formate. Its function is as follows. Removes the formyl group from the N-terminal Met of newly synthesized proteins. Requires at least a dipeptide for an efficient rate of reaction. N-terminal L-methionine is a prerequisite for activity but the enzyme has broad specificity at other positions. The polypeptide is Peptide deformylase (Salinibacter ruber (strain DSM 13855 / M31)).